Here is a 373-residue protein sequence, read N- to C-terminus: Carnosine N-methyltransferase (373 aa).

S-adenosyl-L-methionine is bound by residues Gln110, Arg113, Gly154, Glu175, Asp242, Phe243, and Cys262. Carnosine is bound at residue Asp266. Position 274 (Tyr274) interacts with S-adenosyl-L-methionine. 2 residues coordinate carnosine: His297 and Tyr356.

Belongs to the carnosine N-methyltransferase family.

The protein resides in the cytoplasm. It is found in the nucleus. The enzyme catalyses carnosine + S-adenosyl-L-methionine = anserine + S-adenosyl-L-homocysteine + H(+). N-methyltransferase that mediates the formation of anserine (beta-alanyl-N(Pi)-methyl-L-histidine) from carnosine. Also methylates other L-histidine-containing di- and tripeptides such as Gly-Gly-His, Gly-His and homocarnosine (GABA-His). This is Carnosine N-methyltransferase from Schizosaccharomyces pombe (strain 972 / ATCC 24843) (Fission yeast).